Reading from the N-terminus, the 347-residue chain is Rhodopsin (347 aa).

The Extracellular portion of the chain corresponds to 1 to 33 (TEGPDFYIPMVNTTGVVRSPYEYPQYYLVNPAA). N12 carries an N-linked (GlcNAc...) asparagine glycan. Residues 34-58 (FAVLGAYMFFLIIIGFPINFLTLYV) traverse the membrane as a helical segment. The Cytoplasmic portion of the chain corresponds to 59–70 (TLEHKKLRTPLN). A helical membrane pass occupies residues 71–93 (YILLNLAVADLFMVIGGFTTTMY). Over 94–107 (SSMHGYFVLGRLGC) the chain is Extracellular. A disulfide bond links C107 and C184. A helical transmembrane segment spans residues 108–130 (NIEGFFATLGGMISLWSLAVLAI). The 'Ionic lock' involved in activated form stabilization signature appears at 131-133 (ERW). At 131–149 (ERWVVVCKPISNFRFGENH) the chain is on the cytoplasmic side. The chain crosses the membrane as a helical span at residues 150–170 (AIMGVSLTWVMALACTVPPLV). The Extracellular portion of the chain corresponds to 171–199 (GWSRYIPEGMQCACGIDYYTRAEGYNNES). N197 is a glycosylation site (N-linked (GlcNAc...) asparagine). The helical transmembrane segment at 200–221 (FVIYMFTFHFLFPMFIIFFCYG) threads the bilayer. The Cytoplasmic segment spans residues 222 to 249 (RLLCAVKEAAAAQQESETTQRAEREVTR). Residues 250-271 (MVILMVIGYLVCWLPYASVAWF) traverse the membrane as a helical segment. Over 272-283 (IFTHKGSEFGPL) the chain is Extracellular. A helical membrane pass occupies residues 284–305 (FMAVPSFFAKSSSIYNPIIYIC). K293 bears the N6-(retinylidene)lysine mark. Over 306-347 (MNKQFRQCMITTLFCGKNPFEGQEEDSSTKTEASSASSVSPA) the chain is Cytoplasmic. Residue C320 is the site of S-palmitoyl cysteine attachment. The disordered stretch occupies residues 326–347 (EGQEEDSSTKTEASSASSVSPA). Residues 335-347 (KTEASSASSVSPA) show a composition bias toward low complexity.

This sequence belongs to the G-protein coupled receptor 1 family. Opsin subfamily. Post-translationally, phosphorylated on some or all of the serine and threonine residues present in the C-terminal region. In terms of processing, contains one covalently linked retinal chromophore.

Its subcellular location is the membrane. It localises to the cell projection. The protein localises to the cilium. It is found in the photoreceptor outer segment. Functionally, photoreceptor required for image-forming vision at low light intensity. While most salt water fish species use retinal as chromophore, most freshwater fish use 3-dehydroretinal, or a mixture of retinal and 3-dehydroretinal. Light-induced isomerization of 11-cis to all-trans retinal triggers a conformational change that activates signaling via G-proteins. Subsequent receptor phosphorylation mediates displacement of the bound G-protein alpha subunit by arrestin and terminates signaling. In Sargocentron tiere (Blue lined squirrelfish), this protein is Rhodopsin (rho).